The primary structure comprises 236 residues: MAASSRSTRGRKQRGRSVEAKSRAIRANPPVPRPNPQRNRPPPAGTTCSMSEILLAVSATTADQILEIPVCAGIDFPAGTSPRYIGAAKWLAAQSQMWNTIVFNSVRITWETFTADTTSGYISMAFLSDYMLSIPTGVEDVARIVPSATIALKNRGPSIVMPQNRTVFRCIQAGQFAALGSAADKQMYSPGRFIVAIPKASATQAVGQIKISYSVSYRGAAILQPALVPGPGLANH.

A disordered region spans residues 1-46 (MAASSRSTRGRKQRGRSVEAKSRAIRANPPVPRPNPQRNRPPPAGT). The r domain, interaction with RNA stretch occupies residues 1–51 (MAASSRSTRGRKQRGRSVEAKSRAIRANPPVPRPNPQRNRPPPAGTTCSMS). The span at 29-44 (PPVPRPNPQRNRPPPA) shows a compositional bias: pro residues. The s domain, virion shell stretch occupies residues 52–217 (EILLAVSATT…QIKISYSVSY (166 aa)). The segment at 218–236 (RGAAILQPALVPGPGLANH) is p domain, projecting.

The protein belongs to the icosahedral plant coat protein family. Homomultimer.

It localises to the virion. Functionally, capsid protein self-assembles to form an icosahedral capsid with a T=3 symmetry, about 28-34 nm in diameter, and consisting of 180 capsid proteins. This Zea mays (Maize) protein is Capsid protein.